A 230-amino-acid chain; its full sequence is Phosducin-like protein 1 (230 aa).

Methionine 1 carries the N-acetylmethionine modification. In terms of domain architecture, Phosducin spans 16–166 (AEKDKHTTVD…VVGYKNGLEK (151 aa)). Residues 25–79 (DSDDKSSGEENLDELLNELDRELDEDHEFLSAYRSERLQQISDHLKQVKKNVEDD) adopt a coiled-coil conformation. Positions 81–230 (YGRLQCIDNE…RSESDSDLDI (150 aa)) are thioredoxin fold.

Belongs to the phosducin family. In terms of assembly, interacts with the G protein beta-gamma subunit complex (STE4-STE18 complex).

The protein resides in the cytoplasm. Its function is as follows. Not essential for growth. Inhibits early G-protein signaling events following pheromone stimulation. May help create heterodimerizable beta-tubulin by facilitating the efficient transfer of nascent beta-tubulin polypeptides to the folding apparatus. In Saccharomyces cerevisiae (strain ATCC 204508 / S288c) (Baker's yeast), this protein is Phosducin-like protein 1 (PLP1).